A 141-amino-acid polypeptide reads, in one-letter code: Lutropin subunit beta (141 aa).

The N-terminal stretch at 1–18 (MGTLQGLLLWLLLGTGGA) is a signal peptide. Intrachain disulfides connect C29/C77, C43/C92, C46/C130, C54/C108, C58/C110, and C113/C120. N-linked (GlcNAc...) asparagine glycosylation occurs at N33.

The protein belongs to the glycoprotein hormones subunit beta family. As to quaternary structure, heterodimer of a common alpha chain and a unique beta chain which confers biological specificity to thyrotropin, lutropin, follitropin and gonadotropin.

Its subcellular location is the secreted. In terms of biological role, promotes spermatogenesis and ovulation by stimulating the testes and ovaries to synthesize steroids. This chain is Lutropin subunit beta (LHB), found in Oryctolagus cuniculus (Rabbit).